We begin with the raw amino-acid sequence, 336 residues long: Fructose-1,6-bisphosphatase class 1 (336 aa).

E90, D112, L114, and D115 together coordinate Mg(2+). Residues 115 to 118, N211, and K277 contribute to the substrate site; that span reads DGSS. E283 is a binding site for Mg(2+).

This sequence belongs to the FBPase class 1 family. As to quaternary structure, homotetramer. The cofactor is Mg(2+).

The protein localises to the cytoplasm. The catalysed reaction is beta-D-fructose 1,6-bisphosphate + H2O = beta-D-fructose 6-phosphate + phosphate. Its pathway is carbohydrate biosynthesis; gluconeogenesis. The polypeptide is Fructose-1,6-bisphosphatase class 1 (Pseudomonas putida (strain W619)).